Consider the following 170-residue polypeptide: 3-hydroxyacyl-[acyl-carrier-protein] dehydratase FabZ (170 aa).

His-66 is an active-site residue.

The protein belongs to the thioester dehydratase family. FabZ subfamily.

The protein resides in the cytoplasm. The enzyme catalyses a (3R)-hydroxyacyl-[ACP] = a (2E)-enoyl-[ACP] + H2O. Involved in unsaturated fatty acids biosynthesis. Catalyzes the dehydration of short chain beta-hydroxyacyl-ACPs and long chain saturated and unsaturated beta-hydroxyacyl-ACPs. The protein is 3-hydroxyacyl-[acyl-carrier-protein] dehydratase FabZ of Granulibacter bethesdensis (strain ATCC BAA-1260 / CGDNIH1).